The following is a 196-amino-acid chain: Thymidine kinase (196 aa).

17 to 24 (GPMFAGKT) is a binding site for ATP. The active-site Proton acceptor is glutamate 92. Phenylalanine 121 contacts substrate. Zn(2+) contacts are provided by cysteine 146 and cysteine 149. 166–170 (LILAG) serves as a coordination point for substrate. The Zn(2+) site is built by cysteine 179 and cysteine 182.

This sequence belongs to the thymidine kinase family.

The catalysed reaction is thymidine + ATP = dTMP + ADP + H(+). Phosphorylates thymidine. ASFV replicates in the cytoplasm of infected cells and contains genes encoding a number of enzymes needed for DNA synthesis, including thymidine kinase. Important for growth in swine macrophages in vitro and is a virus virulence factor in swine. The protein is Thymidine kinase of African swine fever virus (strain Badajoz 1971 Vero-adapted) (Ba71V).